We begin with the raw amino-acid sequence, 81 residues long: Cytochrome c oxidase subunit NDUFA4 (81 aa).

The Mitochondrial matrix portion of the chain corresponds to 1–14 (MLRQIIGQAKKHPS). Residue Lys-10 is modified to N6-acetyllysine. A helical membrane pass occupies residues 15–37 (LIPLFVFIGTGATGATLYLLRLA). Residues 38 to 81 (LFNPDVCWDRNNPEPWNKLGPNDQYKFYSVNVDYSKLKKERPDF) lie on the Mitochondrial intermembrane side of the membrane. Ser-66 is subject to Phosphoserine.

The protein belongs to the complex IV NDUFA4 subunit family. In terms of assembly, component of the cytochrome c oxidase (complex IV, CIV), a multisubunit enzyme composed of 14 subunits. The complex is composed of a catalytic core of 3 subunits MT-CO1, MT-CO2 and MT-CO3, encoded in the mitochondrial DNA, and 11 supernumerary subunits COX4I1 (or COX4I2), COX5A, COX5B, COX6A1 (or COX6A2), COX6B1 (or COX6B2), COX6C, COX7A2 (or COX7A1), COX7B, COX7C, COX8A and NDUFA4, which are encoded in the nuclear genome. The complex exists as a monomer or a dimer and forms supercomplexes (SCs) in the inner mitochondrial membrane with NADH-ubiquinone oxidoreductase (complex I, CI) and ubiquinol-cytochrome c oxidoreductase (cytochrome b-c1 complex, complex III, CIII), resulting in different assemblies (supercomplex SCI(1)III(2)IV(1) and megacomplex MCI(2)III(2)IV(2)). Interacts with RAB5IF. Interacts with FLVCR2; this interaction occurs in the absence of heme and is disrupted upon heme binding.

The protein localises to the mitochondrion inner membrane. In terms of biological role, component of the cytochrome c oxidase, the last enzyme in the mitochondrial electron transport chain which drives oxidative phosphorylation. The respiratory chain contains 3 multisubunit complexes succinate dehydrogenase (complex II, CII), ubiquinol-cytochrome c oxidoreductase (cytochrome b-c1 complex, complex III, CIII) and cytochrome c oxidase (complex IV, CIV), that cooperate to transfer electrons derived from NADH and succinate to molecular oxygen, creating an electrochemical gradient over the inner membrane that drives transmembrane transport and the ATP synthase. Cytochrome c oxidase is the component of the respiratory chain that catalyzes the reduction of oxygen to water. Electrons originating from reduced cytochrome c in the intermembrane space (IMS) are transferred via the dinuclear copper A center (CU(A)) of subunit 2 and heme A of subunit 1 to the active site in subunit 1, a binuclear center (BNC) formed by heme A3 and copper B (CU(B)). The BNC reduces molecular oxygen to 2 water molecules unsing 4 electrons from cytochrome c in the IMS and 4 protons from the mitochondrial matrix. NDUFA4 is required for complex IV maintenance. The protein is Cytochrome c oxidase subunit NDUFA4 (NDUFA4) of Homo sapiens (Human).